Consider the following 317-residue polypeptide: Cytochrome c biogenesis protein CcsA (317 aa).

8 consecutive transmembrane segments (helical) span residues 17–37, 44–64, 71–91, 101–121, 143–163, 223–243, 252–272, and 284–304; these read VVSIVITIHLINLLVNEIVGL, GMIVTLFCITGFLIIRWIYSG, LYESLIFLSWNFSIINMLPYL, ITSPSTLFIQGFATSGLLTQI, MILSYASLLCGSLLSIALLVI, IISIGFLFLTIGILSGAVWAN, WDPKETWAFITWTIFAIYLHI, and AIVASIGFLIIWICYFGINIL.

It belongs to the CcmF/CycK/Ccl1/NrfE/CcsA family. In terms of assembly, may interact with Ccs1.

Its subcellular location is the plastid. The protein resides in the chloroplast thylakoid membrane. Required during biogenesis of c-type cytochromes (cytochrome c6 and cytochrome f) at the step of heme attachment. This Pelargonium hortorum (Common geranium) protein is Cytochrome c biogenesis protein CcsA.